Reading from the N-terminus, the 332-residue chain is MASGLTRLLLRGPRCLLATAGLTLIPPVRGVKKGFRAAFRFQKELERWRLLRCPPPPVRRSEKPNWDYHAEIQAFGPRLQETFSLDLLKTAFVNSCYIKSEEAKRQKLGIEKEAVLLNLKDNQELSEQGTSFSQTCLTQFFEDAFPDLPTEGVKSLVDYLTGEEVVCHVARNLAVEQLTLSADFPVPPAVLRQTFFAVIGALLHSSGPERTSLFIRDFLITQMTGKELFEIWKIINPMGLLVQELKKRNISVPESRLTRQSGSTTALPVYFVGLYCDKKLIAEGPGETVLVAEEEAARVALRKLYGFTENRQPWDYSRPKEPVRAEKTIAAS.

The N-terminal 30 residues, 1-30 (MASGLTRLLLRGPRCLLATAGLTLIPPVRG), are a transit peptide targeting the mitochondrion. Residues 86–228 (DLLKTAFVNS…LITQMTGKEL (143 aa)) enclose the RNase III domain. Residues 236-306 (NPMGLLVQEL…ARVALRKLYG (71 aa)) form the DRBM domain.

It belongs to the ribonuclease III family. Mitochondrion-specific ribosomal protein mL44 subfamily. As to quaternary structure, component of the mitochondrial ribosome large subunit (39S) which comprises a 16S rRNA and about 50 distinct proteins.

It localises to the mitochondrion. Its function is as follows. Component of the 39S subunit of mitochondrial ribosome. May have a function in the assembly/stability of nascent mitochondrial polypeptides exiting the ribosome. This chain is Large ribosomal subunit protein mL44 (MRPL44), found in Bos taurus (Bovine).